A 330-amino-acid chain; its full sequence is DNA-directed RNA polymerase subunit alpha (330 aa).

An alpha N-terminal domain (alpha-NTD) region spans residues 1–236 (MQGSVTEFLK…EQLDAFVDLR (236 aa)). Residues 250-330 (FDPILLRPVD…NWPPASIAED (81 aa)) form an alpha C-terminal domain (alpha-CTD) region.

This sequence belongs to the RNA polymerase alpha chain family. Homodimer. The RNAP catalytic core consists of 2 alpha, 1 beta, 1 beta' and 1 omega subunit. When a sigma factor is associated with the core the holoenzyme is formed, which can initiate transcription.

It catalyses the reaction RNA(n) + a ribonucleoside 5'-triphosphate = RNA(n+1) + diphosphate. In terms of biological role, DNA-dependent RNA polymerase catalyzes the transcription of DNA into RNA using the four ribonucleoside triphosphates as substrates. The sequence is that of DNA-directed RNA polymerase subunit alpha from Vibrio vulnificus (strain CMCP6).